The chain runs to 137 residues: Large ribosomal subunit protein uL16 (137 aa).

Residues 1–17 (MLQPKRTKFRKTHKGRN) are compositionally biased toward basic residues. The interval 1 to 23 (MLQPKRTKFRKTHKGRNRGLAQN) is disordered.

The protein belongs to the universal ribosomal protein uL16 family. As to quaternary structure, part of the 50S ribosomal subunit.

Binds 23S rRNA and is also seen to make contacts with the A and possibly P site tRNAs. The chain is Large ribosomal subunit protein uL16 from Pseudoalteromonas translucida (strain TAC 125).